The following is a 423-amino-acid chain: Gamma-glutamyl phosphate reductase 2 (423 aa).

Belongs to the gamma-glutamyl phosphate reductase family.

The protein resides in the cytoplasm. The catalysed reaction is L-glutamate 5-semialdehyde + phosphate + NADP(+) = L-glutamyl 5-phosphate + NADPH + H(+). It functions in the pathway amino-acid biosynthesis; L-proline biosynthesis; L-glutamate 5-semialdehyde from L-glutamate: step 2/2. Functionally, catalyzes the NADPH-dependent reduction of L-glutamate 5-phosphate into L-glutamate 5-semialdehyde and phosphate. The product spontaneously undergoes cyclization to form 1-pyrroline-5-carboxylate. The chain is Gamma-glutamyl phosphate reductase 2 from Bacillus licheniformis (strain ATCC 14580 / DSM 13 / JCM 2505 / CCUG 7422 / NBRC 12200 / NCIMB 9375 / NCTC 10341 / NRRL NRS-1264 / Gibson 46).